The sequence spans 600 residues: Xylulose kinase (600 aa).

79-82 lines the substrate pocket; that stretch reads WLEA. Ser244 bears the Phosphoserine mark. Position 299 (Asp299) interacts with substrate. ATP-binding positions include Gly358 and 505 to 509; that span reads GASKN.

It belongs to the FGGY kinase family.

It is found in the cytoplasm. It carries out the reaction D-xylulose + ATP = D-xylulose 5-phosphate + ADP + H(+). Functionally, xylulose kinase necessary for growth in culture media with D-xylulose as the solecarbon source. This chain is Xylulose kinase, found in Saccharomyces cerevisiae (strain ATCC 204508 / S288c) (Baker's yeast).